A 762-amino-acid polypeptide reads, in one-letter code: Protein PHTF1 (762 aa).

The region spanning 6-150 (RDAISWYQKK…VHCQIVSTQI (145 aa)) is the PHTF domain. The next 3 helical transmembrane spans lie at 77–97 (GLVRVVFFPLFSNWWIQVTSL), 99–119 (IFVWLLLLYFMQVIAIVLYLM), and 121–141 (PIVNISEVLGPLCLMLLMGTV). Positions 152–184 (RPSGNNGNRRRRKLRKTVNGDGSRENGNNSSDK) are disordered. N-linked (GlcNAc...) asparagine glycosylation is found at Asn179 and Asn180. Phosphoserine is present on residues Ser272, Ser276, Ser277, Ser334, and Ser336. Disordered regions lie at residues 344-380 (SAAFSQGSRSGVSGGSRSLNMSRRDSESTRHDSETED) and 393-415 (RSSVTSDSEGAHVNTLHSGTKRD). Low complexity predominate over residues 348–361 (SQGSRSGVSGGSRS). An N-linked (GlcNAc...) asparagine glycan is attached at Asn363. Residues 365–376 (SRRDSESTRHDS) show a composition bias toward basic and acidic residues. N-linked (GlcNAc...) asparagine glycosylation is present at Asn431. Helical transmembrane passes span 473-493 (GVGYQMLGNVVTIGLAFFPFL), 512-532 (EILTLFCGAPPVTPIIVLSII), 611-631 (VVVSSVFLLTLSIAFICCAQV), and 645-665 (WEFLIWETALLLFLLRLASLG). N-linked (GlcNAc...) asparagine glycosylation is found at Asn674 and Asn733. A helical transmembrane segment spans residues 737 to 757 (VVILSAVSGVISDLLGFNIRL).

In terms of assembly, interacts with FEM1B. Widely expressed with highest levels in testis.

The protein resides in the endoplasmic reticulum membrane. The protein localises to the golgi apparatus. Its subcellular location is the cis-Golgi network membrane. The sequence is that of Protein PHTF1 from Homo sapiens (Human).